Here is a 175-residue protein sequence, read N- to C-terminus: MYPAKPAASSSQPAAEMAQPVVGIPISSPGAVAVGPVVGKWSSGLCACSDDCGLCCLTCWCPCITFGRIAEIVDRGATSCGVAGTIYTLLACFTGCHWIYSCTYRSRMRAQLGLPEACCCDCCVHFCCEPCALSQQYRELKARGFDPDLGWDVNAQKAAAAAAMYPPPAEGMMIR.

The next 2 membrane-spanning stretches (helical) occupy residues 53-73 and 80-100; these read GLCC…AEIV and CGVA…HWIY.

It belongs to the cornifelin family. As to expression, expressed in roots, coleoptiles, leaves and stalks.

The protein localises to the membrane. This Zea mays (Maize) protein is Cell number regulator 9 (CNR9).